The chain runs to 574 residues: Acetolactate synthase isozyme 3 large subunit (574 aa).

Thiamine diphosphate is bound at residue Glu-51. Residues Arg-153, 261–282, and 304–323 contribute to the FAD site; these read HGTY…VGVR and DIDP…IVGD. The interval 397–477 is thiamine pyrophosphate binding; sequence QHQMFAALYY…VLVVNLNNRY (81 aa). Residues Asp-448 and Asn-475 each contribute to the Mg(2+) site.

Belongs to the TPP enzyme family. In terms of assembly, dimer of large and small chains. The cofactor is Mg(2+). Thiamine diphosphate serves as cofactor.

It carries out the reaction 2 pyruvate + H(+) = (2S)-2-acetolactate + CO2. It functions in the pathway amino-acid biosynthesis; L-isoleucine biosynthesis; L-isoleucine from 2-oxobutanoate: step 1/4. Its pathway is amino-acid biosynthesis; L-valine biosynthesis; L-valine from pyruvate: step 1/4. With respect to regulation, sensitive to valine inhibition. This is Acetolactate synthase isozyme 3 large subunit (ilvI) from Escherichia coli (strain K12).